We begin with the raw amino-acid sequence, 489 residues long: Ribulose bisphosphate carboxylase large chain (489 aa).

Substrate-binding residues include N128 and T178. K180 (proton acceptor) is an active-site residue. K182 lines the substrate pocket. The Mg(2+) site is built by K206, D208, and E209. K206 is modified (N6-carboxylysine). H298 functions as the Proton acceptor in the catalytic mechanism. Substrate is bound by residues R299, H331, and S383.

The protein belongs to the RuBisCO large chain family. Type I subfamily. Heterohexadecamer of 8 large chains and 8 small chains. Mg(2+) is required as a cofactor.

The enzyme catalyses 2 (2R)-3-phosphoglycerate + 2 H(+) = D-ribulose 1,5-bisphosphate + CO2 + H2O. It catalyses the reaction D-ribulose 1,5-bisphosphate + O2 = 2-phosphoglycolate + (2R)-3-phosphoglycerate + 2 H(+). RuBisCO catalyzes two reactions: the carboxylation of D-ribulose 1,5-bisphosphate, the primary event in carbon dioxide fixation, as well as the oxidative fragmentation of the pentose substrate. Both reactions occur simultaneously and in competition at the same active site. This chain is Ribulose bisphosphate carboxylase large chain, found in Nitrosospira sp. (strain 40KI).